The chain runs to 98 residues: Integration host factor subunit alpha (98 aa).

It belongs to the bacterial histone-like protein family. Heterodimer of an alpha and a beta chain.

In terms of biological role, this protein is one of the two subunits of integration host factor, a specific DNA-binding protein that functions in genetic recombination as well as in transcriptional and translational control. The sequence is that of Integration host factor subunit alpha from Acinetobacter baumannii (strain AB307-0294).